The primary structure comprises 327 residues: UDP-glucose 4-epimerase (327 aa).

Position 119 (Thr119) interacts with substrate. Tyr143 (proton acceptor) is an active-site residue.

The protein belongs to the NAD(P)-dependent epimerase/dehydratase family. Requires NAD(+) as cofactor.

The catalysed reaction is UDP-alpha-D-glucose = UDP-alpha-D-galactose. It participates in carbohydrate metabolism; galactose metabolism. The protein operates within glycan metabolism; exopolysaccharide biosynthesis. The protein is UDP-glucose 4-epimerase (exoB) of Rhizobium leguminosarum bv. trifolii.